The following is a 196-amino-acid chain: Large ribosomal subunit protein bL9 (196 aa).

It belongs to the bacterial ribosomal protein bL9 family.

Its function is as follows. Binds to the 23S rRNA. This chain is Large ribosomal subunit protein bL9, found in Gluconobacter oxydans (strain 621H) (Gluconobacter suboxydans).